The primary structure comprises 454 residues: NADP-specific glutamate dehydrogenase (454 aa).

Ser2 is modified (N-acetylserine). Lys114 is an active-site residue.

It belongs to the Glu/Leu/Phe/Val dehydrogenases family. As to quaternary structure, homohexamer.

It carries out the reaction L-glutamate + NADP(+) + H2O = 2-oxoglutarate + NH4(+) + NADPH + H(+). This Neurospora sitophila (Chrysonilia sitophila) protein is NADP-specific glutamate dehydrogenase (GDH).